The sequence spans 762 residues: MAIQTSNLGYPRIGLQREWKKTLEAFWSNKINEEQFLTTMKEIRLQHVKVQQEKGIELIPIGDFTYYDHVLDTAYMLGFIPSRFSEFTSYLDVYFAMARGSKDHVASEMTKWFNTNYHYIVPEYEEGLQISLKDNRPLRLYEEAKQELGVDGKPVILGPYTFLKLAKGYTQEQFATILKQLVAPYVQLLSELHAAGAQIIQVDEPIFASLTKEEVQQAKEIYEAIRKEVPNATLLLQTYFDSVEENYEEIITFPVSSIGLDFVHGKEGNLNAISKYGFPADKTLAVGCIDGRNIWRADLDEVLTLFTTLQKQVQTKDLIVQPSCSLLHTPIDKTEETHLSTELFDALAFANQKLEELVLTHSALTQGTESISNELETYRNVHHTIRSSAARNREDVKAARTALKEEDFSRPLPFEKRYELQQVALKLPLLPTTTIGSFPQTTEVRQTRKEWRNGIISNEQYEQFIEKETEKWIRYQEEIGLDVLVHGEFERTDMVEYFGERLAGFSFTKNGWVQSYGSRCVKPPVIYGDVAFINGMTIKETVYAQSLTEKVVKGMLTGPVTILNWSFVRNDIPRKEVSYQIALALRHEIELLESSGIRVIQVDEPALREGMPLKEKDWDAYITWAVQSFLLATSSVANETQIHTHMCYSNFEDIVDAIRALDADVISIETSRSHGEFIDTLKHTTYEKGIGLGVYDIHSPRVPSKDEMYKIVEQSLQVCDPKYFWINPDCGLKTRRTEEVIPALEHMVQAAKDARSLLKTNA.

Residues 17–20 (REWK) and Lys111 each bind 5-methyltetrahydropteroyltri-L-glutamate. L-homocysteine contacts are provided by residues 435–437 (IGS) and Glu488. Residues 435–437 (IGS) and Glu488 contribute to the L-methionine site. 5-methyltetrahydropteroyltri-L-glutamate is bound by residues 519-520 (RC) and Trp565. Asp603 lines the L-homocysteine pocket. Asp603 provides a ligand contact to L-methionine. Glu609 contributes to the 5-methyltetrahydropteroyltri-L-glutamate binding site. Zn(2+)-binding residues include His645, Cys647, and Glu669. His698 serves as the catalytic Proton donor. Cys730 is a binding site for Zn(2+).

It belongs to the vitamin-B12 independent methionine synthase family. Requires Zn(2+) as cofactor.

The enzyme catalyses 5-methyltetrahydropteroyltri-L-glutamate + L-homocysteine = tetrahydropteroyltri-L-glutamate + L-methionine. The protein operates within amino-acid biosynthesis; L-methionine biosynthesis via de novo pathway; L-methionine from L-homocysteine (MetE route): step 1/1. Functionally, catalyzes the transfer of a methyl group from 5-methyltetrahydrofolate to homocysteine resulting in methionine formation. In Bacillus cereus (strain AH820), this protein is 5-methyltetrahydropteroyltriglutamate--homocysteine methyltransferase.